The chain runs to 612 residues: tRNA uridine 5-carboxymethylaminomethyl modification enzyme MnmG (612 aa).

An FAD-binding site is contributed by 9 to 14 (GAGHAG). Residue 270-284 (GPLYCPSIEDKVFKF) coordinates NAD(+).

This sequence belongs to the MnmG family. Homodimer. Heterotetramer of two MnmE and two MnmG subunits. FAD serves as cofactor.

It is found in the cytoplasm. Functionally, NAD-binding protein involved in the addition of a carboxymethylaminomethyl (cmnm) group at the wobble position (U34) of certain tRNAs, forming tRNA-cmnm(5)s(2)U34. This is tRNA uridine 5-carboxymethylaminomethyl modification enzyme MnmG from Mycoplasma genitalium (strain ATCC 33530 / DSM 19775 / NCTC 10195 / G37) (Mycoplasmoides genitalium).